A 326-amino-acid polypeptide reads, in one-letter code: Vestitone reductase (326 aa).

NADP(+) is bound by residues 12 to 18, arginine 37, and tyrosine 164; that span reads GGTGFLG.

This sequence belongs to the NAD(P)-dependent epimerase/dehydratase family. Dihydroflavonol-4-reductase subfamily. Monomer. In terms of tissue distribution, detected in roots, and at lower levels in root nodules. Not detected in petioles, leaf and stem.

The enzyme catalyses a (3R,4R)-4,2'-dihydroxyisoflavan + NADP(+) = a (3R)-2'-hydroxyisoflavanone + NADPH + H(+). Inhibited by vestitone concentrations above 50 uM. Stereospecific enzyme that catalyzes the NADPH-dependent reduction of (3R)-vestitone to (3R,4R)-4'-methoxyisoflavan-2',4,7-triol (DMI). Has no activity with (3S)-vestitone. Catalyzes the penultimate step in the biosynthesis of the phytoalexin medicarpin, and thereby contributes to plant defense reactions. This chain is Vestitone reductase, found in Medicago sativa (Alfalfa).